A 147-amino-acid chain; its full sequence is D-aminoacyl-tRNA deacylase (147 aa).

A Gly-cisPro motif, important for rejection of L-amino acids motif is present at residues glycine 137 to proline 138.

This sequence belongs to the DTD family. Homodimer.

The protein resides in the cytoplasm. It carries out the reaction glycyl-tRNA(Ala) + H2O = tRNA(Ala) + glycine + H(+). The enzyme catalyses a D-aminoacyl-tRNA + H2O = a tRNA + a D-alpha-amino acid + H(+). Functionally, an aminoacyl-tRNA editing enzyme that deacylates mischarged D-aminoacyl-tRNAs. Also deacylates mischarged glycyl-tRNA(Ala), protecting cells against glycine mischarging by AlaRS. Acts via tRNA-based rather than protein-based catalysis; rejects L-amino acids rather than detecting D-amino acids in the active site. By recycling D-aminoacyl-tRNA to D-amino acids and free tRNA molecules, this enzyme counteracts the toxicity associated with the formation of D-aminoacyl-tRNA entities in vivo and helps enforce protein L-homochirality. The polypeptide is D-aminoacyl-tRNA deacylase (Levilactobacillus brevis (strain ATCC 367 / BCRC 12310 / CIP 105137 / JCM 1170 / LMG 11437 / NCIMB 947 / NCTC 947) (Lactobacillus brevis)).